Consider the following 295-residue polypeptide: Light-independent protochlorophyllide reductase iron-sulfur ATP-binding protein (295 aa).

Residues 39 to 44 (GIGKST) and Lys68 contribute to the ATP site. Ser43 is a binding site for Mg(2+). The [4Fe-4S] cluster site is built by Cys124 and Cys158. Residue 209–210 (NR) coordinates ATP.

This sequence belongs to the NifH/BchL/ChlL family. Homodimer. Protochlorophyllide reductase is composed of three subunits; ChlL, ChlN and ChlB. [4Fe-4S] cluster is required as a cofactor.

It carries out the reaction chlorophyllide a + oxidized 2[4Fe-4S]-[ferredoxin] + 2 ADP + 2 phosphate = protochlorophyllide a + reduced 2[4Fe-4S]-[ferredoxin] + 2 ATP + 2 H2O. It participates in porphyrin-containing compound metabolism; chlorophyll biosynthesis (light-independent). In terms of biological role, component of the dark-operative protochlorophyllide reductase (DPOR) that uses Mg-ATP and reduced ferredoxin to reduce ring D of protochlorophyllide (Pchlide) to form chlorophyllide a (Chlide). This reaction is light-independent. The L component serves as a unique electron donor to the NB-component of the complex, and binds Mg-ATP. The polypeptide is Light-independent protochlorophyllide reductase iron-sulfur ATP-binding protein (Prochlorococcus marinus (strain MIT 9301)).